A 495-amino-acid chain; its full sequence is UDP-N-acetylmuramoyl-L-alanyl-D-glutamate--2,6-diaminopimelate ligase (495 aa).

Residues Leu27, Ser29, and 44–46 (HQT) each bind UDP-N-acetyl-alpha-D-muramoyl-L-alanyl-D-glutamate. Position 116 to 122 (116 to 122 (GTNGKTT)) interacts with ATP. Residues Asn157, 158–159 (TT), Ser185, Gln191, and Arg193 each bind UDP-N-acetyl-alpha-D-muramoyl-L-alanyl-D-glutamate. An N6-carboxylysine modification is found at Lys225. Meso-2,6-diaminopimelate is bound by residues Arg390, 414 to 417 (DNPR), Gly465, and Glu469. The Meso-diaminopimelate recognition motif signature appears at 414–417 (DNPR).

The protein belongs to the MurCDEF family. MurE subfamily. Requires Mg(2+) as cofactor. Carboxylation is probably crucial for Mg(2+) binding and, consequently, for the gamma-phosphate positioning of ATP.

The protein localises to the cytoplasm. The enzyme catalyses UDP-N-acetyl-alpha-D-muramoyl-L-alanyl-D-glutamate + meso-2,6-diaminopimelate + ATP = UDP-N-acetyl-alpha-D-muramoyl-L-alanyl-gamma-D-glutamyl-meso-2,6-diaminopimelate + ADP + phosphate + H(+). Its pathway is cell wall biogenesis; peptidoglycan biosynthesis. In terms of biological role, catalyzes the addition of meso-diaminopimelic acid to the nucleotide precursor UDP-N-acetylmuramoyl-L-alanyl-D-glutamate (UMAG) in the biosynthesis of bacterial cell-wall peptidoglycan. In Photorhabdus laumondii subsp. laumondii (strain DSM 15139 / CIP 105565 / TT01) (Photorhabdus luminescens subsp. laumondii), this protein is UDP-N-acetylmuramoyl-L-alanyl-D-glutamate--2,6-diaminopimelate ligase.